The chain runs to 351 residues: DNA polymerase IV (351 aa).

A UmuC domain is found at 4–185 (IIHIDMDCFY…LPLRKIPGVG (182 aa)). Mg(2+) contacts are provided by aspartate 8 and aspartate 103. Glutamate 104 is an active-site residue.

Belongs to the DNA polymerase type-Y family. In terms of assembly, monomer. It depends on Mg(2+) as a cofactor.

It localises to the cytoplasm. The catalysed reaction is DNA(n) + a 2'-deoxyribonucleoside 5'-triphosphate = DNA(n+1) + diphosphate. In terms of biological role, poorly processive, error-prone DNA polymerase involved in untargeted mutagenesis. Copies undamaged DNA at stalled replication forks, which arise in vivo from mismatched or misaligned primer ends. These misaligned primers can be extended by PolIV. Exhibits no 3'-5' exonuclease (proofreading) activity. May be involved in translesional synthesis, in conjunction with the beta clamp from PolIII. In Photorhabdus laumondii subsp. laumondii (strain DSM 15139 / CIP 105565 / TT01) (Photorhabdus luminescens subsp. laumondii), this protein is DNA polymerase IV.